The following is a 767-amino-acid chain: Golgin subfamily A member 1 (767 aa).

Positions threonine 13 to serine 58 are disordered. Serine 30, serine 36, serine 41, serine 47, serine 50, and serine 51 each carry phosphoserine. The stretch at serine 50–isoleucine 657 forms a coiled coil. The region spanning threonine 688–threonine 737 is the GRIP domain. Positions lysine 748 to serine 767 are disordered.

In terms of assembly, interacts with RAB6A. Directly interacts with TBC1D23. Interacts with FAM91A1; this interaction may be mediated by TBC1D23. Interacts with ARL1; this interaction recruits Golgin-97/GOLGA1 onto the Golgi apparatus. MARylated by PARP12; MARylation is required for basolateral export of E-Cadherin.

The protein localises to the golgi apparatus membrane. It localises to the golgi apparatus. It is found in the trans-Golgi network membrane. Its subcellular location is the cytoplasmic vesicle. The protein resides in the secretory vesicle. The protein localises to the acrosome. Its function is as follows. Involved in vesicular trafficking at the Golgi apparatus level. Involved in endosome-to-Golgi trafficking. Mechanistically, captures transport vesicles arriving from endosomes via the protein TBC1D23. Recognized vesicles are then tethered to the trans-Golgi before subsequent SNARE engagement and vesicle fusion. Selectively regulates E-cadherin transport from the trans-Golgi network in tubulovesicular carriers. (Microbial infection) Plays an important role in poxvirus morphogenesis. Translocates into the viral factories where it may transport the membrane fragments and associated protein factors important for virus maturation to the sites of virion assembly. This Homo sapiens (Human) protein is Golgin subfamily A member 1 (GOLGA1).